The following is a 955-amino-acid chain: UPF0182 protein tll1193 (955 aa).

Helical transmembrane passes span 6 to 26 (VVPLMPPWLRWLCGLVLAIAL), 53 to 73 (WSVQALLFLAVAGVSQLFYGC), 98 to 118 (GLGLWQLLLCAGSLNWLLIVA), 163 to 183 (WLLGLSLVAVILGLWLPVGLF), 186 to 206 (LGILLSLAMGAIASLSWPVVL), 240 to 260 (LWLVNLSVVGLGGTTLGYLLA), 280 to 300 (LQGLSAFVFATVALSFWLERY), 324 to 344 (LYGWLSASAFGVACLLAWSAI), and 354 to 374 (GPIAPGLFGFTLGYLGVILIV).

It belongs to the UPF0182 family.

The protein localises to the cell membrane. In Thermosynechococcus vestitus (strain NIES-2133 / IAM M-273 / BP-1), this protein is UPF0182 protein tll1193.